We begin with the raw amino-acid sequence, 604 residues long: Threonine--tRNA ligase (604 aa).

The interval 210-501 (DHRKIGTEME…LTEHYAGEFP (292 aa)) is catalytic. Zn(2+)-binding residues include Cys302, His353, and His478.

It belongs to the class-II aminoacyl-tRNA synthetase family. As to quaternary structure, homodimer. Requires Zn(2+) as cofactor.

The protein localises to the cytoplasm. The catalysed reaction is tRNA(Thr) + L-threonine + ATP = L-threonyl-tRNA(Thr) + AMP + diphosphate + H(+). Functionally, catalyzes the attachment of threonine to tRNA(Thr) in a two-step reaction: L-threonine is first activated by ATP to form Thr-AMP and then transferred to the acceptor end of tRNA(Thr). Also edits incorrectly charged L-seryl-tRNA(Thr). The sequence is that of Threonine--tRNA ligase from Sulfurovum sp. (strain NBC37-1).